Consider the following 89-residue polypeptide: MYLTSEKKEEIFSKHGKGKNDTGSAEGQIALFTHRIAHLSEHLKTNRKDYNTERSLVMLVGKRRSLLDYLMKKDIIRYRAIVKELGLRK.

Positions 1 to 13 (MYLTSEKKEEIFS) are enriched in basic and acidic residues. The tract at residues 1–24 (MYLTSEKKEEIFSKHGKGKNDTGS) is disordered.

Belongs to the universal ribosomal protein uS15 family. In terms of assembly, part of the 30S ribosomal subunit. Forms a bridge to the 50S subunit in the 70S ribosome, contacting the 23S rRNA.

Functionally, one of the primary rRNA binding proteins, it binds directly to 16S rRNA where it helps nucleate assembly of the platform of the 30S subunit by binding and bridging several RNA helices of the 16S rRNA. In terms of biological role, forms an intersubunit bridge (bridge B4) with the 23S rRNA of the 50S subunit in the ribosome. The chain is Small ribosomal subunit protein uS15 from Christiangramia forsetii (strain DSM 17595 / CGMCC 1.15422 / KT0803) (Gramella forsetii).